The sequence spans 367 residues: tRNA/tmRNA (uracil-C(5))-methyltransferase (367 aa).

Residues Gln-190, Tyr-218, Asn-223, Glu-239, and Asp-299 each coordinate S-adenosyl-L-methionine. Cys-324 functions as the Nucleophile in the catalytic mechanism. The Proton acceptor role is filled by Glu-358.

It belongs to the class I-like SAM-binding methyltransferase superfamily. RNA M5U methyltransferase family. TrmA subfamily.

The catalysed reaction is uridine(54) in tRNA + S-adenosyl-L-methionine = 5-methyluridine(54) in tRNA + S-adenosyl-L-homocysteine + H(+). It catalyses the reaction uridine(341) in tmRNA + S-adenosyl-L-methionine = 5-methyluridine(341) in tmRNA + S-adenosyl-L-homocysteine + H(+). Functionally, dual-specificity methyltransferase that catalyzes the formation of 5-methyluridine at position 54 (m5U54) in all tRNAs, and that of position 341 (m5U341) in tmRNA (transfer-mRNA). The protein is tRNA/tmRNA (uracil-C(5))-methyltransferase of Yersinia enterocolitica serotype O:8 / biotype 1B (strain NCTC 13174 / 8081).